Reading from the N-terminus, the 79-residue chain is Hematopoietic cell signal transducer (79 aa).

The N-terminal stretch at 1-18 is a signal peptide; sequence MAPPGHLLFLFLLPVAAS. The Extracellular portion of the chain corresponds to 19–35; that stretch reads QTNEGSCSGCGPLSLPL. Residues 36-56 traverse the membrane as a helical segment; the sequence is LAGLVAADAVMSLLIVGVVFV. At 57-79 the chain is on the cytoplasmic side; that stretch reads CMRLHSRPAQEDGRVYINMPGRG. Y72 is modified (phosphotyrosine). Residues 72 to 74 are GRB2 binding site; it reads YIN. The PIK3R1 binding site stretch occupies residues 72–75; the sequence is YINM.

This sequence belongs to the DAP10 family. As to quaternary structure, homodimer; Disulfide-linked. Heterohexamer composed of four subunits of HCST/DAP10 and two subunits of KLRK1. Interacts (via transmembrane domain) with KLRK1 (via transmembrane domain); the interaction is required for KLRK1 NK cell surface and induces NK cell-mediated cytotoxicity. Interacts with PIK3R1 and GRB2. Interacts with CLEC5A. Forms an CLEC5A/TYROBP/HCST trimolecular complex depending almost solely on TYROBP. Interacts with CD300H. Post-translationally, phosphorylated; PIK3R1 and GRB2 associate specifically with tyrosine-phosphorylated HCST. O-glycosylated.

It localises to the membrane. Transmembrane adapter protein which associates with KLRK1 to form an activation receptor KLRK1-HCST in lymphoid and myeloid cells; this receptor plays a major role in triggering cytotoxicity against target cells expressing cell surface ligands such as MHC class I chain-related MICA and MICB, and UL16-binding proteins (ULBPs); these ligands are up-regulated by stress conditions and pathological state such as viral infection and tumor transformation. Functions as a docking site for PI3-kinase PIK3R1 and GRB2. Interaction of ULBPs with KLRK1-HCST triggers calcium mobilization and activation of the PIK3R1, MAP2K/ERK, and JAK2/STAT5 signaling pathways. Both PIK3R1 and GRB2 are required for full KLRK1-HCST-mediated activation and ultimate killing of target cells. In NK cells, KLRK1-HCST signaling directly induces cytotoxicity and enhances cytokine production initiated via DAP12/TYROBP-associated receptors. In T-cells, it provides primarily costimulation for TCR-induced signals. KLRK1-HCST receptor plays a role in immune surveillance against tumors and is required for cytolysis of tumors cells; indeed, melanoma cells that do not express KLRK1 ligands escape from immune surveillance mediated by NK cells. This is Hematopoietic cell signal transducer (Hcst) from Rattus norvegicus (Rat).